The following is a 147-amino-acid chain: Nucleoside diphosphate kinase (147 aa).

ATP is bound by residues lysine 9, phenylalanine 57, arginine 85, threonine 91, arginine 102, and asparagine 112. The active-site Pros-phosphohistidine intermediate is the histidine 115.

Belongs to the NDK family. Homotetramer. Mg(2+) is required as a cofactor.

The protein resides in the cytoplasm. It carries out the reaction a 2'-deoxyribonucleoside 5'-diphosphate + ATP = a 2'-deoxyribonucleoside 5'-triphosphate + ADP. The catalysed reaction is a ribonucleoside 5'-diphosphate + ATP = a ribonucleoside 5'-triphosphate + ADP. Functionally, major role in the synthesis of nucleoside triphosphates other than ATP. The ATP gamma phosphate is transferred to the NDP beta phosphate via a ping-pong mechanism, using a phosphorylated active-site intermediate. This is Nucleoside diphosphate kinase from Brevibacillus brevis (strain 47 / JCM 6285 / NBRC 100599).